A 139-amino-acid polypeptide reads, in one-letter code: Large ribosomal subunit protein eL34 (139 aa).

Residues 113 to 139 (VSKPPKIAKAPAAAAAAKPAKTATKSK) form a disordered region.

Belongs to the eukaryotic ribosomal protein eL34 family.

The chain is Large ribosomal subunit protein eL34 (RpL34) from Ochlerotatus triseriatus (Eastern treehole mosquito).